Here is a 469-residue protein sequence, read N- to C-terminus: Adenosylhomocysteinase (469 aa).

The substrate site is built by Thr-63, Asp-139, and Glu-164. 165–167 is an NAD(+) binding site; it reads TTT. Positions 194 and 198 each coordinate substrate. Residues Asn-199, 228-233, Glu-251, Asn-300, 321-323, and Asn-375 contribute to the NAD(+) site; these read GYGDVG and IGH.

This sequence belongs to the adenosylhomocysteinase family. NAD(+) is required as a cofactor.

Its subcellular location is the cytoplasm. It catalyses the reaction S-adenosyl-L-homocysteine + H2O = L-homocysteine + adenosine. The protein operates within amino-acid biosynthesis; L-homocysteine biosynthesis; L-homocysteine from S-adenosyl-L-homocysteine: step 1/1. Functionally, may play a key role in the regulation of the intracellular concentration of adenosylhomocysteine. In Pseudomonas aeruginosa (strain UCBPP-PA14), this protein is Adenosylhomocysteinase.